Reading from the N-terminus, the 30-residue chain is Dermaseptin-DI4 (30 aa).

As to expression, expressed by the skin glands.

Its subcellular location is the secreted. Its function is as follows. Antibacterial activity against Gram-positive bacteria S.aureus and E.faecalis, and Gram-negative bacteria P.aeruginosa and E.coli. This is Dermaseptin-DI4 from Phyllomedusa distincta (Monkey frog).